The sequence spans 345 residues: Uroporphyrinogen decarboxylase (345 aa).

Substrate contacts are provided by residues 26 to 30, Asp76, Tyr151, Ser205, and His321; that span reads RQAGR.

Belongs to the uroporphyrinogen decarboxylase family. As to quaternary structure, homodimer.

It localises to the cytoplasm. The catalysed reaction is uroporphyrinogen III + 4 H(+) = coproporphyrinogen III + 4 CO2. Its pathway is porphyrin-containing compound metabolism; protoporphyrin-IX biosynthesis; coproporphyrinogen-III from 5-aminolevulinate: step 4/4. Its function is as follows. Catalyzes the decarboxylation of four acetate groups of uroporphyrinogen-III to yield coproporphyrinogen-III. The chain is Uroporphyrinogen decarboxylase from Phenylobacterium zucineum (strain HLK1).